The chain runs to 142 residues: MSANYMRLLCLMACCLSICLAYGPVRPIVNRYGRGRVIDVVKPVDTAEAQAAALTNAAGAAAASAKLDGANWYALNRYGWEQGRPLLSKPYGPLDKLYAAALPPRSFVAEIDPVFKKSNYGGLYGDKTITLNTGAKLAVSVA.

The first 21 residues, 1 to 21 (MSANYMRLLCLMACCLSICLA), serve as a signal peptide directing secretion.

It belongs to the chorion protein S16 family.

Its subcellular location is the secreted. Its function is as follows. Chorion membrane (egg shell) protein; plays a role in protecting the egg from the environment. The chain is Chorion protein S16 (Cp16) from Drosophila grimshawi (Hawaiian fruit fly).